Reading from the N-terminus, the 434-residue chain is 3-phosphoshikimate 1-carboxyvinyltransferase (434 aa).

Positions 22, 23, and 27 each coordinate 3-phosphoshikimate. Phosphoenolpyruvate is bound at residue lysine 22. Phosphoenolpyruvate is bound by residues glycine 93 and arginine 121. Positions 168, 169, 170, 199, 320, and 347 each coordinate 3-phosphoshikimate. Phosphoenolpyruvate is bound at residue glutamine 170. Catalysis depends on aspartate 320, which acts as the Proton acceptor. Phosphoenolpyruvate-binding residues include arginine 351, arginine 394, and lysine 419.

This sequence belongs to the EPSP synthase family. As to quaternary structure, monomer.

The protein resides in the cytoplasm. It carries out the reaction 3-phosphoshikimate + phosphoenolpyruvate = 5-O-(1-carboxyvinyl)-3-phosphoshikimate + phosphate. It participates in metabolic intermediate biosynthesis; chorismate biosynthesis; chorismate from D-erythrose 4-phosphate and phosphoenolpyruvate: step 6/7. Catalyzes the transfer of the enolpyruvyl moiety of phosphoenolpyruvate (PEP) to the 5-hydroxyl of shikimate-3-phosphate (S3P) to produce enolpyruvyl shikimate-3-phosphate and inorganic phosphate. This chain is 3-phosphoshikimate 1-carboxyvinyltransferase, found in Burkholderia lata (strain ATCC 17760 / DSM 23089 / LMG 22485 / NCIMB 9086 / R18194 / 383).